We begin with the raw amino-acid sequence, 314 residues long: Prohormone-3 (314 aa).

The N-terminal stretch at 1–19 is a signal peptide; it reads MGRVLLSASSLLLHIQVFT. Residues 90-112 traverse the membrane as a helical segment; the sequence is YTCVALTVVALVSTMHFGVEAWG.

It is found in the membrane. The sequence is that of Prohormone-3 from Apis mellifera (Honeybee).